Consider the following 130-residue polypeptide: Phosphoribosyl-AMP cyclohydrolase (130 aa).

Asp77 is a Mg(2+) binding site. Position 78 (Cys78) interacts with Zn(2+). Residues Asp79 and Asp81 each contribute to the Mg(2+) site. Zn(2+) is bound by residues Cys95 and Cys102.

This sequence belongs to the PRA-CH family. In terms of assembly, homodimer. The cofactor is Mg(2+). It depends on Zn(2+) as a cofactor.

The protein localises to the cytoplasm. The enzyme catalyses 1-(5-phospho-beta-D-ribosyl)-5'-AMP + H2O = 1-(5-phospho-beta-D-ribosyl)-5-[(5-phospho-beta-D-ribosylamino)methylideneamino]imidazole-4-carboxamide. It participates in amino-acid biosynthesis; L-histidine biosynthesis; L-histidine from 5-phospho-alpha-D-ribose 1-diphosphate: step 3/9. Catalyzes the hydrolysis of the adenine ring of phosphoribosyl-AMP. The polypeptide is Phosphoribosyl-AMP cyclohydrolase (Pseudomonas entomophila (strain L48)).